Here is a 228-residue protein sequence, read N- to C-terminus: Fluoride-specific ion channel FluC (228 aa).

7 helical membrane-spanning segments follow: residues 3 to 23 (LSLF…FWVS), 37 to 57 (GTLF…VMMI), 72 to 92 (VGFL…LALF), 101 to 121 (ALNV…GAVL), 141 to 161 (IFGA…LAFA), 172 to 192 (LVLV…LVVT), and 202 to 222 (LWGA…LGLV). Na(+) contacts are provided by G76 and T79.

Belongs to the fluoride channel Fluc/FEX (TC 1.A.43) family.

It localises to the cell inner membrane. The enzyme catalyses fluoride(in) = fluoride(out). Na(+) is not transported, but it plays an essential structural role and its presence is essential for fluoride channel function. Fluoride-specific ion channel. Important for reducing fluoride concentration in the cell, thus reducing its toxicity. The protein is Fluoride-specific ion channel FluC of Methylococcus capsulatus (strain ATCC 33009 / NCIMB 11132 / Bath).